Reading from the N-terminus, the 215-residue chain is MTFNIIKLENWDRKEYFEHYFNQQTTYSITKEIDITLFKDMIKKKGYEIYPSLIYAIMEVVNKNKVFRTGINSENKLGYWDKLNPLYTVFNKQTEKFTNIWTESDNNFTSFYNNYKNDLFEYKDKEEMFPKKPIPENTIPISMIPWIDFSSFNLNIGNNSSFLLPIITIGKFYSENNKIYIPVALQLHHAVCDGYHASLFINEFQDIIKKVDDWI.

The active-site Proton acceptor is the His189.

The protein belongs to the chloramphenicol acetyltransferase family. In terms of assembly, homotrimer.

It catalyses the reaction chloramphenicol + acetyl-CoA = chloramphenicol 3-acetate + CoA. In terms of biological role, this enzyme is an effector of chloramphenicol resistance in bacteria. This Staphylococcus intermedius protein is Chloramphenicol acetyltransferase (cat).